A 31-amino-acid chain; its full sequence is Cyclotide hyen-J (31 aa).

Positions 1–31 (GSVPCGESCVWIPCITSIAGCSCSNKVCYMD) form a cross-link, cyclopeptide (Gly-Asp). Intrachain disulfides connect C5/C21, C9/C23, and C14/C28.

In terms of processing, this is a cyclic peptide. As to expression, detected in seeds (at protein level).

In terms of biological role, probably participates in a plant defense mechanism. In Pigea enneasperma (Spade flower), this protein is Cyclotide hyen-J.